The chain runs to 601 residues: Elongation factor 4 (601 aa).

The tr-type G domain maps to 6–188 (SHIRNFSIIA…QIVHRVPAPE (183 aa)). Residues 18-23 (DHGKST) and 135-138 (NKID) each bind GTP.

The protein belongs to the TRAFAC class translation factor GTPase superfamily. Classic translation factor GTPase family. LepA subfamily.

The protein resides in the cell inner membrane. It carries out the reaction GTP + H2O = GDP + phosphate + H(+). Required for accurate and efficient protein synthesis under certain stress conditions. May act as a fidelity factor of the translation reaction, by catalyzing a one-codon backward translocation of tRNAs on improperly translocated ribosomes. Back-translocation proceeds from a post-translocation (POST) complex to a pre-translocation (PRE) complex, thus giving elongation factor G a second chance to translocate the tRNAs correctly. Binds to ribosomes in a GTP-dependent manner. The polypeptide is Elongation factor 4 (Anaeromyxobacter dehalogenans (strain 2CP-1 / ATCC BAA-258)).